The chain runs to 305 residues: tRNA dimethylallyltransferase (305 aa).

15–22 lines the ATP pocket; that stretch reads GPTASGKS. Residue 17–22 participates in substrate binding; sequence TASGKS. 2 interaction with substrate tRNA regions span residues 40-43 and 164-168; these read DSMQ and QRIVR.

Belongs to the IPP transferase family. In terms of assembly, monomer. It depends on Mg(2+) as a cofactor.

The catalysed reaction is adenosine(37) in tRNA + dimethylallyl diphosphate = N(6)-dimethylallyladenosine(37) in tRNA + diphosphate. Its function is as follows. Catalyzes the transfer of a dimethylallyl group onto the adenine at position 37 in tRNAs that read codons beginning with uridine, leading to the formation of N6-(dimethylallyl)adenosine (i(6)A). The polypeptide is tRNA dimethylallyltransferase (Sinorhizobium medicae (strain WSM419) (Ensifer medicae)).